We begin with the raw amino-acid sequence, 523 residues long: Metalloprotease TIKI2 (523 aa).

An N-terminal signal peptide occupies residues 1 to 26; that stretch reads MGKTMWARAVFLCFSVGTLLWQEVLT. At 27–499 the chain is on the extracellular side; sequence RRIPVDTGQC…HSQSNSSPKC (473 aa). Residues Asn-225, Asn-234, Asn-283, and Asn-341 are each glycosylated (N-linked (GlcNAc...) asparagine). The chain crosses the membrane as a helical span at residues 500–516; it reads LSASPAFLYTLVTLCLI. The Cytoplasmic portion of the chain corresponds to 517-523; that stretch reads TTMRTRS.

The protein belongs to the TIKI family. It depends on Mn(2+) as a cofactor. Co(2+) serves as cofactor.

The protein localises to the cell membrane. Its function is as follows. Metalloprotease that acts as a negative regulator of the Wnt signaling pathway by mediating the cleavage of the N-terminal residues of a subset of Wnt proteins. Following cleavage, Wnt proteins become oxidized and form large disulfide-bond oligomers, leading to their inactivation. Able to cleave wnt8. Required for head formation. The chain is Metalloprotease TIKI2 (trabd2b) from Xenopus tropicalis (Western clawed frog).